A 281-amino-acid polypeptide reads, in one-letter code: sn-glycerol-3-phosphate transport system permease protein UgpE (281 aa).

The next 6 membrane-spanning stretches (helical) occupy residues 14–34 (VMLI…FVAA), 82–104 (VMAF…AIVY), 113–133 (FFWL…FPTI), 142–162 (LDSY…TFLF), 188–210 (FWDI…TFIY), and 247–267 (WNQV…VVLL). The ABC transmembrane type-1 domain occupies 77 to 268 (LFNSFVMAFA…IPPVAVVLLM (192 aa)).

This sequence belongs to the binding-protein-dependent transport system permease family. UgpAE subfamily. The complex is composed of two ATP-binding proteins (UgpC), two transmembrane proteins (UgpA and UgpE) and a solute-binding protein (UgpB).

The protein resides in the cell inner membrane. Part of the ABC transporter complex UgpBAEC involved in sn-glycerol-3-phosphate (G3P) import. Probably responsible for the translocation of the substrate across the membrane. This is sn-glycerol-3-phosphate transport system permease protein UgpE (ugpE) from Yersinia enterocolitica serotype O:8 / biotype 1B (strain NCTC 13174 / 8081).